The following is a 570-amino-acid chain: Peptidyl-prolyl cis-trans isomerase CYP63 (570 aa).

One can recognise a PPIase cyclophilin-type domain in the interval 10–174 (FLDVSIGGDP…SPVKIIDCGE (165 aa)). Positions 180 to 570 (AHDAAEREKG…GKRGLVSYAD (391 aa)) are disordered. The span at 203 to 219 (VSDREAKETRKKESNEK) shows a compositional bias: basic and acidic residues. Low complexity-rich tracts occupy residues 229–238 (SSDSYSSSSD) and 246–259 (EAYSSSSYESSSSS). Residues 262-292 (KHRKRKSTTRHKGRRGERKSKGRSGKKKARP) are compositionally biased toward basic residues. A compositionally biased stretch (low complexity) spans 297–309 (STNSSSDTESSSS). Residues 323–339 (VKVDNADQHANLDDSVK) are compositionally biased toward basic and acidic residues. Position 340 is a phosphoserine (S340). Residues 340–351 (SRSRSPIRRRNQ) show a composition bias toward basic residues. Positions 352 to 365 (NSRSKSPSRSPVRV) are enriched in low complexity. Composition is skewed to basic and acidic residues over residues 387–397 (SPREKPTEETV) and 437–467 (SPPRHWPDRRNFQDRNRDRYPSNRSYSERSP). A compositionally biased stretch (basic residues) spans 468–490 (RGRFRSPPRRRSPPRYNRRRRST). Basic and acidic residues predominate over residues 495–505 (DGYRRRLRDGS). Basic residues predominate over residues 509 to 523 (SPRHRSRSQSPRKRQ). A compositionally biased stretch (low complexity) spans 546 to 555 (SPAESLSPSH).

Belongs to the cyclophilin-type PPIase family. Interacts with SNRNP35, RNU1, SCL28, SCL30, SR30 and SR34. The binding to SR34 is phosphorylation-dependent. As to expression, ubiquitous.

It is found in the nucleus. Its subcellular location is the nucleoplasm. The protein resides in the nucleus speckle. The catalysed reaction is [protein]-peptidylproline (omega=180) = [protein]-peptidylproline (omega=0). In terms of biological role, PPIases accelerate the folding of proteins. It catalyzes the cis-trans isomerization of proline imidic peptide bonds in oligopeptides. May be implicated in the folding, transport, and assembly of proteins. Probably involved in early steps of spliceosomal assembly. In Arabidopsis thaliana (Mouse-ear cress), this protein is Peptidyl-prolyl cis-trans isomerase CYP63 (CYP63).